The primary structure comprises 391 residues: Chaperone protein DnaJ (391 aa).

A J domain is found at 2–67 (DYYDVLGVSK…QKRESYDRYG (66 aa)). The CR-type zinc-finger motif lies at 148–226 (GVKKELLVSG…CRGQGRIKDK (79 aa)). 8 residues coordinate Zn(2+): Cys-161, Cys-164, Cys-178, Cys-181, Cys-200, Cys-203, Cys-214, and Cys-217. CXXCXGXG motif repeat units lie at residues 161–168 (CETCSGSG), 178–185 (CDRCKGSG), 200–207 (CPECGGEG), and 214–221 (CSSCRGQG).

Belongs to the DnaJ family. As to quaternary structure, homodimer. Zn(2+) serves as cofactor.

Its subcellular location is the cytoplasm. In terms of biological role, participates actively in the response to hyperosmotic and heat shock by preventing the aggregation of stress-denatured proteins and by disaggregating proteins, also in an autonomous, DnaK-independent fashion. Unfolded proteins bind initially to DnaJ; upon interaction with the DnaJ-bound protein, DnaK hydrolyzes its bound ATP, resulting in the formation of a stable complex. GrpE releases ADP from DnaK; ATP binding to DnaK triggers the release of the substrate protein, thus completing the reaction cycle. Several rounds of ATP-dependent interactions between DnaJ, DnaK and GrpE are required for fully efficient folding. Also involved, together with DnaK and GrpE, in the DNA replication of plasmids through activation of initiation proteins. The chain is Chaperone protein DnaJ from Chlamydia abortus (strain DSM 27085 / S26/3) (Chlamydophila abortus).